A 294-amino-acid polypeptide reads, in one-letter code: Halotolerance protein HAL1 (294 aa).

The disordered stretch occupies residues 115–153; it reads LKRGTKEQEDINSSTSKKSAVINNFSGEKTPNPRPQSSN. Polar residues predominate over residues 125–153; the sequence is INSSTSKKSAVINNFSGEKTPNPRPQSSN. Serine 266 is modified (phosphoserine).

It is found in the cytoplasm. Functionally, involved in salt tolerance. In Saccharomyces cerevisiae (strain ATCC 204508 / S288c) (Baker's yeast), this protein is Halotolerance protein HAL1 (HAL1).